We begin with the raw amino-acid sequence, 311 residues long: Tricarboxylate transport protein, mitochondrial (311 aa).

Positions 1–13 are cleaved as a propeptide — removed in mature form; the sequence is MAAARAPRALTSA. Low complexity predominate over residues 1–15; that stretch reads MAAARAPRALTSASP. Residues 1-22 form a disordered region; that stretch reads MAAARAPRALTSASPGSGKAKL. Solcar repeat units follow at residues 23–111, 122–208, and 218–303; these read THPG…LSNH, TRGL…LRNW, and MNPL…VVKL. 3 consecutive transmembrane segments (helical) span residues 29–46, 86–105, and 129–143; these read ILAGGLAGGIEICITFPT, GLSSLLYGSIPKAAVRFGTF, and LGAGVPEAVVVVCPM. Ser156 is modified (phosphoserine). 3 helical membrane-spanning segments follow: residues 183–202, 224–241, and 278–297; these read GLTATVLKQGSNQGIRFFVM, GVFGAIAGAASVFGNTPL, and GTVPRLGRVCLDVAIVFIIY.

The protein belongs to the mitochondrial carrier (TC 2.A.29) family. Possesses a short cleavable presequence, which, however, is found to be dispensable both for targeting to mitochondria and insertion into the inner membrane. However, the presequence is required to keep SLC25A1 in a soluble state and thus in an import-competent state. Mature SLC25A1 lacking the presequence is prone to aggregation.

It is found in the mitochondrion inner membrane. It localises to the mitochondrion membrane. It catalyses the reaction (S)-malate(in) + citrate(out) = (S)-malate(out) + citrate(in). The enzyme catalyses D-threo-isocitrate(in) + citrate(out) = D-threo-isocitrate(out) + citrate(in). The catalysed reaction is citrate(out) + succinate(in) = citrate(in) + succinate(out). It carries out the reaction phosphoenolpyruvate(in) + citrate(out) = phosphoenolpyruvate(out) + citrate(in). It catalyses the reaction cis-aconitate(in) + citrate(out) = cis-aconitate(out) + citrate(in). The enzyme catalyses trans-aconitate(in) + citrate(out) = trans-aconitate(out) + citrate(in). The catalysed reaction is maleate(in) + citrate(out) = maleate(out) + citrate(in). Mitochondrial electroneutral antiporter that exports citrate from the mitochondria into the cytosol in exchange for malate. Also able to mediate the exchange of citrate for isocitrate, phosphoenolpyruvate, cis-aconitate and to a lesser extent trans-aconitate, maleate and succinate. In the cytoplasm, citrate plays important roles in fatty acid and sterol synthesis, regulation of glycolysis, protein acetylation, and other physiopathological processes. The sequence is that of Tricarboxylate transport protein, mitochondrial (SLC25A1) from Bos taurus (Bovine).